Consider the following 392-residue polypeptide: Chaperone protein DnaJ (392 aa).

A J domain is found at 5 to 75 (DYYEVLGIDK…QKKQQYDQFG (71 aa)). The CR-type zinc finger occupies 148–229 (GVEKTIKYKR…CHGTGTAKET (82 aa)). Cys161, Cys164, Cys177, Cys180, Cys203, Cys206, Cys217, and Cys220 together coordinate Zn(2+). CXXCXGXG motif repeat units follow at residues 161–168 (CENCHGTG), 177–184 (CPTCNGQG), 203–210 (CPDCHGTG), and 217–224 (CKHCHGTG).

Belongs to the DnaJ family. In terms of assembly, homodimer. Zn(2+) serves as cofactor.

It is found in the cytoplasm. Functionally, participates actively in the response to hyperosmotic and heat shock by preventing the aggregation of stress-denatured proteins and by disaggregating proteins, also in an autonomous, DnaK-independent fashion. Unfolded proteins bind initially to DnaJ; upon interaction with the DnaJ-bound protein, DnaK hydrolyzes its bound ATP, resulting in the formation of a stable complex. GrpE releases ADP from DnaK; ATP binding to DnaK triggers the release of the substrate protein, thus completing the reaction cycle. Several rounds of ATP-dependent interactions between DnaJ, DnaK and GrpE are required for fully efficient folding. Also involved, together with DnaK and GrpE, in the DNA replication of plasmids through activation of initiation proteins. The sequence is that of Chaperone protein DnaJ from Fusobacterium nucleatum subsp. nucleatum (strain ATCC 25586 / DSM 15643 / BCRC 10681 / CIP 101130 / JCM 8532 / KCTC 2640 / LMG 13131 / VPI 4355).